A 378-amino-acid polypeptide reads, in one-letter code: WUSCHEL-related homeobox 9 (378 aa).

Disordered regions lie at residues 1-60 (MASS…NPKP) and 123-173 (KHSL…GSQM). The segment covering 32-42 (SASHRSSPFSS) has biased composition (low complexity). A compositionally biased stretch (basic and acidic residues) spans 45–54 (EVERSPEPKP). Positions 51–115 (EPKPRWNPKP…NRKSRSKHKL (65 aa)) form a DNA-binding region, homeobox; WUS-type. Composition is skewed to low complexity over residues 137–152 (PSAS…SSKS) and 161–171 (KNNTNLSLGGS).

The protein belongs to the WUS homeobox family. As to expression, expressed in the basal cell and later at the boundary between suspensor and proembryo. Expressed at low levels in proliferating tissues post embryonically. Detected in vegetative shoot apical meristem, leaf primordia, floral meristems, emerging floral organs, epidermal layer of the placenta and in the upper portion of the root meristematic zone.

It localises to the nucleus. The protein localises to the cytoplasm. Homeodomain transcription factor required for meristem growth and early development. Promotes cell proliferation and prevents premature differentiation in meristematic tissues during postembryonic development. Essential for maintaining tissue growth during embryogenesis. May act by repressing TSS to promote meristematic proliferation. Involved in the transcriptional activation of a subset of cytokinin response factors. May act as a negative regulator of cytokinin signaling in the dark. The polypeptide is WUSCHEL-related homeobox 9 (Arabidopsis thaliana (Mouse-ear cress)).